A 126-amino-acid chain; its full sequence is Aspartate 1-decarboxylase (126 aa).

The active-site Schiff-base intermediate with substrate; via pyruvic acid is the S25. Pyruvic acid (Ser) is present on S25. T57 is a binding site for substrate. Residue Y58 is the Proton donor of the active site. A substrate-binding site is contributed by 73–75; the sequence is GSA.

The protein belongs to the PanD family. In terms of assembly, heterooctamer of four alpha and four beta subunits. The cofactor is pyruvate. In terms of processing, is synthesized initially as an inactive proenzyme, which is activated by self-cleavage at a specific serine bond to produce a beta-subunit with a hydroxyl group at its C-terminus and an alpha-subunit with a pyruvoyl group at its N-terminus.

The protein resides in the cytoplasm. The catalysed reaction is L-aspartate + H(+) = beta-alanine + CO2. It participates in cofactor biosynthesis; (R)-pantothenate biosynthesis; beta-alanine from L-aspartate: step 1/1. Its function is as follows. Catalyzes the pyruvoyl-dependent decarboxylation of aspartate to produce beta-alanine. The chain is Aspartate 1-decarboxylase from Acidovorax ebreus (strain TPSY) (Diaphorobacter sp. (strain TPSY)).